A 416-amino-acid chain; its full sequence is (S)-ureidoglycine--glyoxylate transaminase (416 aa).

Lys-198 carries the post-translational modification N6-(pyridoxal phosphate)lysine.

This sequence belongs to the class-V pyridoxal-phosphate-dependent aminotransferase family. As to quaternary structure, homodimer. Pyridoxal 5'-phosphate serves as cofactor.

The catalysed reaction is (S)-2-ureidoglycine + glyoxylate = N-carbamoyl-2-oxoglycine + glycine. Its pathway is nitrogen metabolism; (S)-allantoin degradation. Its function is as follows. Catalyzes the transamination between an unstable intermediate ((S)-ureidoglycine) and the end product of purine catabolism (glyoxylate) to yield oxalurate and glycine. Glyoxylate is the preferred substrate, but other amino-group acceptors can be used. In Bacillus subtilis (strain 168), this protein is (S)-ureidoglycine--glyoxylate transaminase.